The following is a 297-amino-acid chain: Trimeric intracellular cation channel type A (297 aa).

Residues 1 to 18 are Lumenal-facing; the sequence is MDLISSLSLGELALSFSR. The helical transmembrane segment at 19–39 threads the bilayer; it reads VPLFPVFDLSYFIVSIIYLKY. Over 40–51 the chain is Cytoplasmic; the sequence is EPGSVELSRRHP. Residues 52–72 traverse the membrane as a helical segment; that stretch reads VASWLCAMLHCFGSYILADLL. Over 73 to 85 the chain is Lumenal; sequence LGEPIIDYFSNSS. Position 74 (glycine 74) interacts with Ca(2+). A helical membrane pass occupies residues 86-106; the sequence is SILLASGVWYLIFFCPLDLFY. Over 107-143 the chain is Cytoplasmic; that stretch reads KCVCFLPVKLIFVAMKEVVRVRKIAVGIHHAHHYHHG. Lysine 122 and arginine 126 together coordinate a 1,2-diacyl-sn-glycero-3-phospho-(1D-myo-inositol-4,5-bisphosphate). Residues 144 to 164 form a helical membrane-spanning segment; sequence WFIMIATGWVKGSGVALLSNL. Topologically, residues 165–177 are lumenal; sequence EQLLRGVWKPETN. A helical transmembrane segment spans residues 178-198; the sequence is EILHMSFPTKASLYGAILFTL. Residues 199 to 208 lie on the Cytoplasmic side of the membrane; the sequence is QQTRWLPVSK. The chain crosses the membrane as a helical span at residues 209-229; that stretch reads ASLIFVFTMFMVSCKVFLTAT. At 230 to 233 the chain is on the lumenal side; it reads HSHS. Residues 234–254 traverse the membrane as a helical segment; that stretch reads SPFDVLEGYICPVLFGATWGG. The Cytoplasmic segment spans residues 255–297; it reads DHHHDNHGAPHGMGLGTQHSGLPAKAKEELSEGFRKKKTKKAD. A disordered region spans residues 259-297; it reads DNHGAPHGMGLGTQHSGLPAKAKEELSEGFRKKKTKKAD. Positions 279–288 are enriched in basic and acidic residues; that stretch reads KAKEELSEGF.

Belongs to the TMEM38 family. In terms of assembly, homotrimer; conformation seems to be controled by binding to diacylglycerol (DAG).

The protein resides in the sarcoplasmic reticulum membrane. The protein localises to the nucleus membrane. The catalysed reaction is K(+)(in) = K(+)(out). Its activity is regulated as follows. Channel activity is activated by a change of voltage within the sarcoplasmic reticulum lumen and blocked by luminal high Ca(2+) levels. In terms of biological role, intracellular monovalent cation channel required for maintenance of rapid intracellular calcium release. Acts as a potassium counter-ion channel that functions in synchronization with calcium release from intracellular stores. Opened by a change of voltage within the sarcoplasmic reticulum lumen. This chain is Trimeric intracellular cation channel type A, found in Rattus norvegicus (Rat).